The following is a 261-amino-acid chain: 3-methyl-2-oxobutanoate hydroxymethyltransferase (261 aa).

Asp-42 and Asp-81 together coordinate Mg(2+). Residues 42-43 (DS), Asp-81, and Lys-110 contribute to the 3-methyl-2-oxobutanoate site. Glu-112 provides a ligand contact to Mg(2+). Glu-179 serves as the catalytic Proton acceptor.

The protein belongs to the PanB family. Homodecamer; pentamer of dimers. Mg(2+) serves as cofactor.

Its subcellular location is the cytoplasm. It catalyses the reaction 3-methyl-2-oxobutanoate + (6R)-5,10-methylene-5,6,7,8-tetrahydrofolate + H2O = 2-dehydropantoate + (6S)-5,6,7,8-tetrahydrofolate. Its pathway is cofactor biosynthesis; coenzyme A biosynthesis. Catalyzes the reversible reaction in which hydroxymethyl group from 5,10-methylenetetrahydrofolate is transferred onto alpha-ketoisovalerate to form ketopantoate. This chain is 3-methyl-2-oxobutanoate hydroxymethyltransferase, found in Pyrobaculum neutrophilum (strain DSM 2338 / JCM 9278 / NBRC 100436 / V24Sta) (Thermoproteus neutrophilus).